A 658-amino-acid chain; its full sequence is UvrABC system protein B (658 aa).

Positions 25–182 constitute a Helicase ATP-binding domain; that stretch reads ESLNGGNSHQ…KGLVDIQYSR (158 aa). 38–45 is a binding site for ATP; sequence GVTGSGKT. The short motif at 91 to 114 is the Beta-hairpin element; sequence YYDYYQPEAYIPQTDTYIEKDASI. The Helicase C-terminal domain maps to 429–595; it reads QIDDLYSEIN…TVQKKVHDVI (167 aa). The UVR domain occupies 622–657; the sequence is KELIAKLQEEMKQAAKELEFEKAAELRDLIMELKTA.

Belongs to the UvrB family. As to quaternary structure, forms a heterotetramer with UvrA during the search for lesions. Interacts with UvrC in an incision complex.

It localises to the cytoplasm. Its function is as follows. The UvrABC repair system catalyzes the recognition and processing of DNA lesions. A damage recognition complex composed of 2 UvrA and 2 UvrB subunits scans DNA for abnormalities. Upon binding of the UvrA(2)B(2) complex to a putative damaged site, the DNA wraps around one UvrB monomer. DNA wrap is dependent on ATP binding by UvrB and probably causes local melting of the DNA helix, facilitating insertion of UvrB beta-hairpin between the DNA strands. Then UvrB probes one DNA strand for the presence of a lesion. If a lesion is found the UvrA subunits dissociate and the UvrB-DNA preincision complex is formed. This complex is subsequently bound by UvrC and the second UvrB is released. If no lesion is found, the DNA wraps around the other UvrB subunit that will check the other stand for damage. The sequence is that of UvrABC system protein B from Natranaerobius thermophilus (strain ATCC BAA-1301 / DSM 18059 / JW/NM-WN-LF).